Here is a 587-residue protein sequence, read N- to C-terminus: DELLA protein RGA (587 aa).

A disordered region spans residues 1–26 (MKRDHHQFQGRLSNHGTSSSSSSISK). Positions 44-48 (DELLA) match the DELLA motif motif. Positions 66-70 (LEQLE) match the LEXLE motif motif. The VHYNP motif motif lies at 89-93 (VHYNP). The tract at residues 152–181 (IDSSSSSNNQNKRLKSCSSPDSMVTSTSTG) is disordered. A compositionally biased stretch (polar residues) spans 153 to 175 (DSSSSSNNQNKRLKSCSSPDSMV). Positions 212–581 (VDSQENGVRL…RPLITTSAWK (370 aa)) constitute a GRAS domain. Residues 219–273 (VRLVHALMACAEAIQQNNLTLAEALVKQIGCLAVSQAGAMRKVATYFAEALARRI) form a leucine repeat I (LRI) region. The tract at residues 292–357 (QMHFYETCPY…GGPPTFRLTG (66 aa)) is VHIID. Residues 323–327 (VHVID) carry the VHIID motif. The interval 371-403 (EVGCKLAQLAEAIHVEFEYRGFVANSLADLDAS) is leucine repeat II (LRII). The tract at residues 415-502 (VAVNSVFELH…EVYLGKQICN (88 aa)) is PFYRE. Positions 423-427 (LHKLL) match the LXXLL motif motif. Residues 505–581 (ACEGPDRVER…RPLITTSAWK (77 aa)) are SAW.

It belongs to the GRAS family. DELLA subfamily. As to quaternary structure, interacts directly with the GID2/SLY1 component of the SCF(GID2) complex. Interacts (via N-terminus) with GID1A, GID1B and GID1B (via N-terminus). Binds to bHLH transcription factors such as MYC2, PIF1, PIF4, PIF6 and SPT. Interacts with the BOI proteins BOI, BRG1, BRG2 and BRG3. Interacts with NFYC9. Interacts with TOPP4. Interacts with FLZ5. Binds to zinc finger proteins MGP/IDD3, IDD4, IDD5, BIB/IDD9 and JKD/IDD10 in the nucleus. Binds to and coactivates GAF1/IDD2 and ENY/IDD1. Binds to PDF2 and ATML1. Post-translationally, phosphorylated. Phosphorylation may increase the interaction with GID2. Gibberellin (GA) induces dephosphorylation of RGA by TOPP4 and subsequent degradation by the proteasomal pathway. In terms of processing, ubiquitinated. Upon GA application it is ubiquitinated by the SCF(GID2) complex, leading to its subsequent degradation. Post-translationally, O-fucosylated by SPY. O-fucosylation enhances RGA activity by promoting RGA binding to key transcription factors in brassinosteroid and light signaling pathways. In terms of tissue distribution, ubiquitously expressed. Expressed in roots, rosette leaves, bolting and mature stems, young and mature siliques, flower buds and influorescences.

It is found in the nucleus. Probable transcriptional regulator that acts as a repressor of the gibberellin (GA) signaling pathway. Probably acts by participating in large multiprotein complexes that repress transcription of GA-inducible genes. Positively regulates XERICO expression in seeds. Upon GA application, it is degraded by the proteasome, allowing the GA signaling pathway. Compared to other DELLA proteins, it is the most sensitive to GA application. No effect of the BOI proteins on its stability. Its activity is probably regulated by other phytohormones such as auxin and ethylene, attenuation of auxin transport delaying its GA-induced degradation. Involved in the regulation of seed dormancy and germination, including glucose-induced delay of seed germination. The sequence is that of DELLA protein RGA from Arabidopsis thaliana (Mouse-ear cress).